The chain runs to 263 residues: Glutamate racemase (263 aa).

Residues 13-14 (DS) and 45-46 (YG) each bind substrate. The active-site Proton donor/acceptor is the cysteine 77. Substrate is bound at residue 78-79 (NT). The active-site Proton donor/acceptor is the cysteine 185. 186–187 (TH) is a substrate binding site.

It belongs to the aspartate/glutamate racemases family.

It catalyses the reaction L-glutamate = D-glutamate. It participates in cell wall biogenesis; peptidoglycan biosynthesis. Provides the (R)-glutamate required for cell wall biosynthesis. This chain is Glutamate racemase, found in Vibrio vulnificus (strain CMCP6).